The chain runs to 74 residues: Protein kish-B (74 aa).

The first 22 residues, 1–22, serve as a signal peptide directing secretion; that stretch reads MTNVYSLDGILVFGLLFVCTCA. Residues 23–52 lie on the Extracellular side of the membrane; that stretch reads YFKKVPRLKTWLLSEKKGVWGVFYKAAVIG. A helical membrane pass occupies residues 53–73; sequence TRLHAAVAIACIVMAFYVLFI. Residue lysine 74 is a topological domain, cytoplasmic.

Belongs to the KISH family.

It localises to the golgi apparatus membrane. Its function is as follows. Involved in the early part of the secretory pathway. This chain is Protein kish-B (TMEM167B), found in Bos taurus (Bovine).